Here is a 99-residue protein sequence, read N- to C-terminus: Malonate decarboxylase acyl carrier protein (99 aa).

S25 carries the post-translational modification O-(phosphoribosyl dephospho-coenzyme A)serine.

Belongs to the MdcC family. Covalently binds the prosthetic group of malonate decarboxylase.

Its subcellular location is the cytoplasm. Subunit of malonate decarboxylase, it is an acyl carrier protein to which acetyl and malonyl thioester residues are bound via a 2'-(5''-phosphoribosyl)-3'-dephospho-CoA prosthetic group and turn over during the catalytic mechanism. This is Malonate decarboxylase acyl carrier protein from Pseudomonas syringae pv. tomato (strain ATCC BAA-871 / DC3000).